The primary structure comprises 504 residues: Syntaphilin (504 aa).

The segment at 1 to 74 is disordered; sequence MAMSLQGSRR…HGIKPPTPEQ (74 aa). Low complexity-rich tracts occupy residues 7–26 and 33–49; these read GSRR…VSVR and SLSS…SDSS. Residues 79 to 161 are a coiled coil; it reads LQQKEVCIRH…VKNNLIDKDK (83 aa). The tract at residues 191–244 is disordered; it reads VAKEEGTGESAGGSPARSLTRSSTYTKLSDPAVCGDRQAGDPSNTPAEDRADSG. Phosphoserine is present on residues S200 and S204. Positions 207 to 217 are enriched in polar residues; that stretch reads RSLTRSSTYTK. T214 carries the phosphothreonine modification. Position 219 is a phosphoserine (S219). The residue at position 235 (T235) is a Phosphothreonine. The helical transmembrane segment at 437 to 456 threads the bilayer; sequence YIVDLLAVVVPAVPTVAWLC.

In terms of assembly, binds to STX1A. Interacts with DNM1; this interaction inhibits the binding of DNM1 to AMPH and DNM1-receptor-mediated endocytosis.

It is found in the membrane. The protein localises to the synapse. The protein resides in the synaptosome. Functionally, inhibits SNARE complex formation by absorbing free STX1A. This is Syntaphilin from Rattus norvegicus (Rat).